A 332-amino-acid polypeptide reads, in one-letter code: Glycerol-3-phosphate dehydrogenase [NAD(P)+] (332 aa).

Residues Ser11, Trp12, Arg32, Arg33, and Lys106 each contribute to the NADPH site. Positions 106 and 136 each coordinate sn-glycerol 3-phosphate. Ala140 contacts NADPH. Residues Lys191, Asp244, Ser254, Arg255, and Asn256 each coordinate sn-glycerol 3-phosphate. Lys191 acts as the Proton acceptor in catalysis. Position 255 (Arg255) interacts with NADPH. Residues Val280 and Glu282 each contribute to the NADPH site.

The protein belongs to the NAD-dependent glycerol-3-phosphate dehydrogenase family.

The protein resides in the cytoplasm. The catalysed reaction is sn-glycerol 3-phosphate + NAD(+) = dihydroxyacetone phosphate + NADH + H(+). It catalyses the reaction sn-glycerol 3-phosphate + NADP(+) = dihydroxyacetone phosphate + NADPH + H(+). Its pathway is membrane lipid metabolism; glycerophospholipid metabolism. Functionally, catalyzes the reduction of the glycolytic intermediate dihydroxyacetone phosphate (DHAP) to sn-glycerol 3-phosphate (G3P), the key precursor for phospholipid synthesis. This chain is Glycerol-3-phosphate dehydrogenase [NAD(P)+], found in Corynebacterium glutamicum (strain R).